Reading from the N-terminus, the 369-residue chain is Glutamate 5-kinase (369 aa).

Position 9 (K9) interacts with ATP. Substrate is bound by residues S49, D136, and N148. Residues 168–169 (TD) and 210–216 (TGGMLTK) contribute to the ATP site. One can recognise a PUA domain in the interval 275–355 (RGSVYVDEGA…KGVFIHRDDW (81 aa)).

The protein belongs to the glutamate 5-kinase family.

Its subcellular location is the cytoplasm. The enzyme catalyses L-glutamate + ATP = L-glutamyl 5-phosphate + ADP. The protein operates within amino-acid biosynthesis; L-proline biosynthesis; L-glutamate 5-semialdehyde from L-glutamate: step 1/2. Catalyzes the transfer of a phosphate group to glutamate to form L-glutamate 5-phosphate. This is Glutamate 5-kinase from Neisseria meningitidis serogroup C / serotype 2a (strain ATCC 700532 / DSM 15464 / FAM18).